The chain runs to 739 residues: Phosphoribosylformylglycinamidine synthase subunit PurL (739 aa).

Histidine 54 is a catalytic residue. The ATP site is built by tyrosine 57 and lysine 96. Glutamate 98 lines the Mg(2+) pocket. Residues 99–102 and arginine 121 contribute to the substrate site; that span reads SHNH. Catalysis depends on histidine 100, which acts as the Proton acceptor. Residue aspartate 122 coordinates Mg(2+). Residue glutamine 245 coordinates substrate. Residue aspartate 273 participates in Mg(2+) binding. Residue 317 to 319 coordinates substrate; that stretch reads ESQ. The ATP site is built by aspartate 500 and glycine 537. Mg(2+) is bound at residue asparagine 538. Serine 540 serves as a coordination point for substrate.

The protein belongs to the FGAMS family. In terms of assembly, monomer. Part of the FGAM synthase complex composed of 1 PurL, 1 PurQ and 2 PurS subunits.

It is found in the cytoplasm. The enzyme catalyses N(2)-formyl-N(1)-(5-phospho-beta-D-ribosyl)glycinamide + L-glutamine + ATP + H2O = 2-formamido-N(1)-(5-O-phospho-beta-D-ribosyl)acetamidine + L-glutamate + ADP + phosphate + H(+). It participates in purine metabolism; IMP biosynthesis via de novo pathway; 5-amino-1-(5-phospho-D-ribosyl)imidazole from N(2)-formyl-N(1)-(5-phospho-D-ribosyl)glycinamide: step 1/2. In terms of biological role, part of the phosphoribosylformylglycinamidine synthase complex involved in the purines biosynthetic pathway. Catalyzes the ATP-dependent conversion of formylglycinamide ribonucleotide (FGAR) and glutamine to yield formylglycinamidine ribonucleotide (FGAM) and glutamate. The FGAM synthase complex is composed of three subunits. PurQ produces an ammonia molecule by converting glutamine to glutamate. PurL transfers the ammonia molecule to FGAR to form FGAM in an ATP-dependent manner. PurS interacts with PurQ and PurL and is thought to assist in the transfer of the ammonia molecule from PurQ to PurL. This chain is Phosphoribosylformylglycinamidine synthase subunit PurL, found in Bacillus cereus (strain B4264).